The chain runs to 126 residues: Histone H2B type 2-E (126 aa).

Residues 1–12 (MPEPAKSAPAPK) are compositionally biased toward low complexity. The disordered stretch occupies residues 1–32 (MPEPAKSAPAPKKGSKKAVTKAQKKDGKKRKR). Position 2 is an N-acetylproline (Pro-2). The residue at position 3 (Glu-3) is an ADP-ribosyl glutamic acid. N6-(2-hydroxyisobutyryl)lysine; alternate is present on Lys-6. Lys-6 is modified (N6-(beta-hydroxybutyryl)lysine; alternate). N6-acetyllysine; alternate is present on Lys-6. Lys-6 carries the N6-butyryllysine; alternate modification. Lys-6 carries the post-translational modification N6-crotonyllysine; alternate. An N6-lactoyllysine; alternate modification is found at Lys-6. A Glycyl lysine isopeptide (Lys-Gly) (interchain with G-Cter in SUMO2); alternate cross-link involves residue Lys-6. The residue at position 7 (Ser-7) is an ADP-ribosylserine. N6-(beta-hydroxybutyryl)lysine; alternate is present on Lys-12. Residues Lys-12 and Lys-13 each carry the N6-acetyllysine; alternate modification. N6-crotonyllysine; alternate is present on residues Lys-12 and Lys-13. An N6-lactoyllysine; alternate modification is found at Lys-12. Lys-13 is subject to N6-(2-hydroxyisobutyryl)lysine; alternate. Ser-15 is modified (phosphoserine; by STK4/MST1). N6-acetyllysine; alternate is present on residues Lys-16, Lys-17, Lys-21, and Lys-24. An N6-crotonyllysine; alternate mark is found at Lys-16, Lys-17, Lys-21, and Lys-24. 4 positions are modified to N6-lactoyllysine; alternate: Lys-16, Lys-17, Lys-21, and Lys-24. Lys-17 is subject to N6-glutaryllysine; alternate. Residues Lys-21 and Lys-24 each carry the N6-(2-hydroxyisobutyryl)lysine; alternate modification. Residue Lys-21 is modified to N6-(beta-hydroxybutyryl)lysine; alternate. Lys-21 is modified (N6-butyryllysine; alternate). Lys-21 participates in a covalent cross-link: Glycyl lysine isopeptide (Lys-Gly) (interchain with G-Cter in SUMO2); alternate. Lys-25 carries the post-translational modification N6-(2-hydroxyisobutyryl)lysine. Lys-35 carries the N6-(2-hydroxyisobutyryl)lysine; alternate modification. The residue at position 35 (Lys-35) is an N6-(beta-hydroxybutyryl)lysine; alternate. Lys-35 carries the post-translational modification N6-crotonyllysine; alternate. Residue Lys-35 is modified to N6-glutaryllysine; alternate. The residue at position 35 (Lys-35) is an N6-succinyllysine; alternate. Lys-35 is covalently cross-linked (Glycyl lysine isopeptide (Lys-Gly) (interchain with G-Cter in ubiquitin); alternate). Residue Glu-36 is modified to PolyADP-ribosyl glutamic acid. Ser-37 carries the phosphoserine; by AMPK modification. N6-(2-hydroxyisobutyryl)lysine; alternate occurs at positions 44, 47, and 58. At Lys-44 the chain carries N6-lactoyllysine; alternate. An N6-glutaryllysine; alternate mark is found at Lys-44 and Lys-47. The residue at position 47 (Lys-47) is an N6-methyllysine; alternate. Lys-58 is modified (N6,N6-dimethyllysine; alternate). Arg-80 is modified (dimethylated arginine). Residue Lys-86 is modified to N6-(2-hydroxyisobutyryl)lysine; alternate. At Lys-86 the chain carries N6-acetyllysine; alternate. Lys-86 is modified (N6-lactoyllysine; alternate). Residue Lys-86 is modified to N6,N6,N6-trimethyllysine; alternate. Arg-87 and Arg-93 each carry omega-N-methylarginine. Position 109 is an N6-(2-hydroxyisobutyryl)lysine; alternate (Lys-109). Lys-109 carries the N6-lactoyllysine; alternate modification. Lys-109 bears the N6-glutaryllysine; alternate mark. Lys-109 carries the post-translational modification N6-methyllysine; alternate. Ser-113 carries O-linked (GlcNAc) serine glycosylation. Thr-116 carries the post-translational modification Phosphothreonine. Residues Lys-117 and Lys-121 each carry the N6-(2-hydroxyisobutyryl)lysine; alternate modification. The residue at position 117 (Lys-117) is an N6-(beta-hydroxybutyryl)lysine; alternate. N6-lactoyllysine; alternate occurs at positions 117 and 121. An N6-glutaryllysine; alternate mark is found at Lys-117 and Lys-121. Lys-117 and Lys-121 each carry N6-succinyllysine; alternate. Lys-117 carries the N6-methylated lysine; alternate modification. A Glycyl lysine isopeptide (Lys-Gly) (interchain with G-Cter in ubiquitin); alternate cross-link involves residue Lys-121.

It belongs to the histone H2B family. The nucleosome is a histone octamer containing two molecules each of H2A, H2B, H3 and H4 assembled in one H3-H4 heterotetramer and two H2A-H2B heterodimers. The octamer wraps approximately 147 bp of DNA. Monoubiquitination at Lys-35 (H2BK34Ub) by the MSL1/MSL2 dimer is required for histone H3 'Lys-4' (H3K4me) and 'Lys-79' (H3K79me) methylation and transcription activation at specific gene loci, such as HOXA9 and MEIS1 loci. Similarly, monoubiquitination at Lys-121 (H2BK120Ub) by the RNF20/40 complex gives a specific tag for epigenetic transcriptional activation and is also prerequisite for histone H3 'Lys-4' and 'Lys-79' methylation. It also functions cooperatively with the FACT dimer to stimulate elongation by RNA polymerase II. H2BK120Ub also acts as a regulator of mRNA splicing: deubiquitination by USP49 is required for efficient cotranscriptional splicing of a large set of exons. In terms of processing, phosphorylated on Ser-15 (H2BS14ph) by STK4/MST1 during apoptosis; which facilitates apoptotic chromatin condensation. Also phosphorylated on Ser-15 in response to DNA double strand breaks (DSBs), and in correlation with somatic hypermutation and immunoglobulin class-switch recombination. Phosphorylation at Ser-37 (H2BS36ph) by AMPK in response to stress promotes transcription. Post-translationally, ADP-ribosylated by PARP1 or PARP2 on Ser-7 (H2BS6ADPr) in response to DNA damage. H2BS6ADPr promotes recruitment of CHD1L. Mono-ADP-ribosylated on Glu-3 (H2BE2ADPr) by PARP3 in response to single-strand breaks. Poly ADP-ribosylation on Glu-36 (H2BE35ADPr) by PARP1 regulates adipogenesis: it inhibits phosphorylation at Ser-37 (H2BS36ph), thereby blocking expression of pro-adipogenetic genes. Crotonylation (Kcr) is specifically present in male germ cells and marks testis-specific genes in post-meiotic cells, including X-linked genes that escape sex chromosome inactivation in haploid cells. Crotonylation marks active promoters and enhancers and confers resistance to transcriptional repressors. It is also associated with post-meiotically activated genes on autosomes. In terms of processing, glcNAcylation at Ser-113 promotes monoubiquitination of Lys-121. It fluctuates in response to extracellular glucose, and associates with transcribed genes. Post-translationally, lactylated in macrophages by EP300/P300 by using lactoyl-CoA directly derived from endogenous or exogenous lactate, leading to stimulates gene transcription.

It localises to the nucleus. The protein resides in the chromosome. In terms of biological role, core component of nucleosome. Nucleosomes wrap and compact DNA into chromatin, limiting DNA accessibility to the cellular machineries which require DNA as a template. Histones thereby play a central role in transcription regulation, DNA repair, DNA replication and chromosomal stability. DNA accessibility is regulated via a complex set of post-translational modifications of histones, also called histone code, and nucleosome remodeling. Its function is as follows. Has broad antibacterial activity. May contribute to the formation of the functional antimicrobial barrier of the colonic epithelium, and to the bactericidal activity of amniotic fluid. The protein is Histone H2B type 2-E of Pongo abelii (Sumatran orangutan).